A 361-amino-acid polypeptide reads, in one-letter code: UDP-N-acetylglucosamine--N-acetylmuramyl-(pentapeptide) pyrophosphoryl-undecaprenol N-acetylglucosamine transferase (361 aa).

Residues 12-14 (TGG), asparagine 124, arginine 163, serine 189, isoleucine 241, 260-265 (ALTVSE), and glutamine 286 contribute to the UDP-N-acetyl-alpha-D-glucosamine site.

The protein belongs to the glycosyltransferase 28 family. MurG subfamily.

The protein resides in the cell inner membrane. The catalysed reaction is di-trans,octa-cis-undecaprenyl diphospho-N-acetyl-alpha-D-muramoyl-L-alanyl-D-glutamyl-meso-2,6-diaminopimeloyl-D-alanyl-D-alanine + UDP-N-acetyl-alpha-D-glucosamine = di-trans,octa-cis-undecaprenyl diphospho-[N-acetyl-alpha-D-glucosaminyl-(1-&gt;4)]-N-acetyl-alpha-D-muramoyl-L-alanyl-D-glutamyl-meso-2,6-diaminopimeloyl-D-alanyl-D-alanine + UDP + H(+). It functions in the pathway cell wall biogenesis; peptidoglycan biosynthesis. Functionally, cell wall formation. Catalyzes the transfer of a GlcNAc subunit on undecaprenyl-pyrophosphoryl-MurNAc-pentapeptide (lipid intermediate I) to form undecaprenyl-pyrophosphoryl-MurNAc-(pentapeptide)GlcNAc (lipid intermediate II). This chain is UDP-N-acetylglucosamine--N-acetylmuramyl-(pentapeptide) pyrophosphoryl-undecaprenol N-acetylglucosamine transferase, found in Aeromonas hydrophila subsp. hydrophila (strain ATCC 7966 / DSM 30187 / BCRC 13018 / CCUG 14551 / JCM 1027 / KCTC 2358 / NCIMB 9240 / NCTC 8049).